The chain runs to 502 residues: Rab11 family-interacting protein 4B (502 aa).

Disordered stretches follow at residues 1 to 49 (MSIQ…EEGI) and 71 to 98 (SALS…TTSS). The span at 15–29 (EEGRGVERDSDRDSA) shows a compositional bias: basic and acidic residues. Over residues 71-80 (SALSSASLNE) the composition is skewed to polar residues. Positions 81-93 (EQFEDYGEGEDGD) are enriched in acidic residues. A coiled-coil region spans residues 228–482 (DVKTKLKQEN…EEINLRLRQY (255 aa)). Positions 439 to 501 (EAKNLFATQT…DHNPSILEIK (63 aa)) constitute an FIP-RBD domain.

In terms of assembly, homodimer. Forms a complex with Rab11 (rab11a or rab11b) and arf6.

The protein localises to the recycling endosome membrane. It localises to the cleavage furrow. It is found in the midbody. Its subcellular location is the cytoplasmic vesicle. In terms of biological role, acts as a regulator of endocytic traffic by participating in membrane delivery. Required for the abscission step in cytokinesis, possibly by acting as an 'address tag' delivering recycling endosome membranes to the cleavage furrow during late cytokinesis. This chain is Rab11 family-interacting protein 4B (rab11fip4b), found in Danio rerio (Zebrafish).